The chain runs to 483 residues: ATP-dependent RNA helicase DDX25 (483 aa).

Threonine 49 is subject to Phosphothreonine. The Nuclear export signal signature appears at 61-74 (LAANSLLNKLIRQS). A Q motif motif is present at residues 97–125 (KTFEELRLKEELLKGIYAMGFNRPSKIQE). The short motif at 100–114 (EELRLKEELLKGIYA) is the Nuclear localization signal element. The 171-residue stretch at 130–300 (MMLAHPPQNL…ERIIPDPNVI (171 aa)) folds into the Helicase ATP-binding domain. 143–150 (SQSGTGKT) lines the ATP pocket. Positions 247–250 (DEAD) match the DEAD box motif. The Helicase C-terminal domain occupies 311 to 478 (NIRQYYVLCE…QLDPEDMDEI (168 aa)).

This sequence belongs to the DEAD box helicase family. Phosphorylated on threonine residues. The phosphorylated form is found in the cytoplasm but not in the nucleus. In terms of tissue distribution, isoform 1 is expressed in germ cells. Isoform 2 is highly expressed in Leydig cells and weakly expressed in the pituitary and hypothalamus. Isoform 3 is weakly expressed only in germ cells.

It localises to the cytoplasm. The protein localises to the nucleus. It carries out the reaction ATP + H2O = ADP + phosphate + H(+). ATP-dependent RNA helicase. Required for mRNA export and translation regulation during spermatid development. The polypeptide is ATP-dependent RNA helicase DDX25 (Ddx25) (Rattus norvegicus (Rat)).